The following is a 382-amino-acid chain: SOX domain-containing protein dichaete (382 aa).

Disordered stretches follow at residues 53 to 142 (GGSP…EGHI) and 346 to 382 (YPSS…PVLY). Positions 60-69 (AGQGVNGSSG) are enriched in gly residues. Low complexity predominate over residues 96–123 (NSSIGSAGSLGSQSSLGSNGSGLNSSSG). A DNA-binding region (HMG box) is located at residues 142-210 (IKRPMNAFMV…LHMKEHPDYK (69 aa)). Residues 347-360 (PSSSTSSPGSSPGT) show a composition bias toward low complexity.

As to expression, initially expressed in a pair-rule-like pattern which is rapidly replaced by strong neuroectoderm expression.

It is found in the nucleus. Essential for segmentation and CNS development. May modulate the actions of other transcription factors, including gap and pair-rule proteins. In Drosophila melanogaster (Fruit fly), this protein is SOX domain-containing protein dichaete (D).